A 200-amino-acid chain; its full sequence is Recombination protein RecR (200 aa).

A C4-type zinc finger spans residues 57-72 (CNECRTFTEEDVCHIC). The Toprim domain maps to 81–176 (GLLCVVESPA…DASRIAHGVP (96 aa)).

Belongs to the RecR family.

Its function is as follows. May play a role in DNA repair. It seems to be involved in an RecBC-independent recombinational process of DNA repair. It may act with RecF and RecO. This chain is Recombination protein RecR, found in Vibrio vulnificus (strain CMCP6).